Reading from the N-terminus, the 806-residue chain is G-type lectin S-receptor-like serine/threonine-protein kinase At1g61430 (806 aa).

The N-terminal stretch at 1-24 is a signal peptide; the sequence is MGKKRIVFFAYLPFFTIFMSFSFA. Residues 25–144 form the Bulb-type lectin domain; the sequence is GITKESPFSI…VSGRTLWQSF (120 aa). Topologically, residues 25 to 425 are extracellular; sequence GITKESPFSI…ELDVNKRKMT (401 aa). N-linked (GlcNAc...) asparagine glycosylation is found at Asn-53, Asn-94, Asn-117, and Asn-236. The 37-residue stretch at 277–313 folds into the EGF-like domain; that stretch reads PANSCDIYGVCGPFGLCVVSIPPKCKCFKGFVPKFAK. Disulfide bonds link Cys-281/Cys-293 and Cys-287/Cys-301. N-linked (GlcNAc...) asparagine glycosylation is found at Asn-319, Asn-335, and Asn-374. The PAN domain occupies 332-414; sequence CQGNSSGKDA…GELLSIRLAR (83 aa). 2 disulfide bridges follow: Cys-367–Cys-388 and Cys-371–Cys-377. A helical transmembrane segment spans residues 426–446; that stretch reads IVASTVSLTLFVIFGFAAFGF. The Cytoplasmic segment spans residues 447–806; the sequence is WRCRVEHNAH…EMTESVIQGR (360 aa). One can recognise a Protein kinase domain in the interval 489-777; that stretch reads FSLSNKLGPG…DLPLPKKPTF (289 aa). Residues 495-503 and Lys-520 contribute to the ATP site; that span reads LGPGGFGSV. Phosphoserine occurs at positions 526 and 541. The tract at residues 581-598 is caM-binding; that stretch reads RKKLELDWPKRFEIIEGI. Asp-617 (proton acceptor) is an active-site residue. Residues Ser-621 and Ser-634 each carry the phosphoserine modification. At Thr-651 the chain carries Phosphothreonine. A phosphoserine mark is found at Ser-694, Ser-695, and Ser-788.

The protein belongs to the protein kinase superfamily. Ser/Thr protein kinase family.

It is found in the cell membrane. The catalysed reaction is L-seryl-[protein] + ATP = O-phospho-L-seryl-[protein] + ADP + H(+). It catalyses the reaction L-threonyl-[protein] + ATP = O-phospho-L-threonyl-[protein] + ADP + H(+). The chain is G-type lectin S-receptor-like serine/threonine-protein kinase At1g61430 from Arabidopsis thaliana (Mouse-ear cress).